The chain runs to 321 residues: Biotin synthase (321 aa).

In terms of domain architecture, Radical SAM core spans Arg-44–Arg-270. Residues Cys-59, Cys-63, and Cys-66 each contribute to the [4Fe-4S] cluster site. Residues Cys-103, Cys-135, Cys-195, and Arg-265 each coordinate [2Fe-2S] cluster.

The protein belongs to the radical SAM superfamily. Biotin synthase family. As to quaternary structure, homodimer. Requires [4Fe-4S] cluster as cofactor. It depends on [2Fe-2S] cluster as a cofactor.

It catalyses the reaction (4R,5S)-dethiobiotin + (sulfur carrier)-SH + 2 reduced [2Fe-2S]-[ferredoxin] + 2 S-adenosyl-L-methionine = (sulfur carrier)-H + biotin + 2 5'-deoxyadenosine + 2 L-methionine + 2 oxidized [2Fe-2S]-[ferredoxin]. It participates in cofactor biosynthesis; biotin biosynthesis; biotin from 7,8-diaminononanoate: step 2/2. Functionally, catalyzes the conversion of dethiobiotin (DTB) to biotin by the insertion of a sulfur atom into dethiobiotin via a radical-based mechanism. In Magnetococcus marinus (strain ATCC BAA-1437 / JCM 17883 / MC-1), this protein is Biotin synthase.